A 216-amino-acid chain; its full sequence is Probable nicotinate-nucleotide adenylyltransferase (216 aa).

This sequence belongs to the NadD family.

The enzyme catalyses nicotinate beta-D-ribonucleotide + ATP + H(+) = deamido-NAD(+) + diphosphate. It participates in cofactor biosynthesis; NAD(+) biosynthesis; deamido-NAD(+) from nicotinate D-ribonucleotide: step 1/1. Catalyzes the reversible adenylation of nicotinate mononucleotide (NaMN) to nicotinic acid adenine dinucleotide (NaAD). The chain is Probable nicotinate-nucleotide adenylyltransferase from Desulfatibacillum aliphaticivorans.